We begin with the raw amino-acid sequence, 205 residues long: Small ribosomal subunit protein uS4 (205 aa).

The S4 RNA-binding domain occupies 95 to 163; the sequence is RRLDNVVYRL…FKENLESRDP (69 aa).

Belongs to the universal ribosomal protein uS4 family. In terms of assembly, part of the 30S ribosomal subunit. Contacts protein S5. The interaction surface between S4 and S5 is involved in control of translational fidelity.

Its function is as follows. One of the primary rRNA binding proteins, it binds directly to 16S rRNA where it nucleates assembly of the body of the 30S subunit. With S5 and S12 plays an important role in translational accuracy. This chain is Small ribosomal subunit protein uS4, found in Persephonella marina (strain DSM 14350 / EX-H1).